We begin with the raw amino-acid sequence, 682 residues long: DNA-directed RNA polymerase subunit beta' (682 aa).

Zn(2+) contacts are provided by C69, C71, C87, and C90. Residues D489, D491, and D493 each coordinate Mg(2+).

It belongs to the RNA polymerase beta' chain family. RpoC1 subfamily. As to quaternary structure, in plastids the minimal PEP RNA polymerase catalytic core is composed of four subunits: alpha, beta, beta', and beta''. When a (nuclear-encoded) sigma factor is associated with the core the holoenzyme is formed, which can initiate transcription. It depends on Mg(2+) as a cofactor. Requires Zn(2+) as cofactor.

The protein resides in the plastid. The protein localises to the chloroplast. It catalyses the reaction RNA(n) + a ribonucleoside 5'-triphosphate = RNA(n+1) + diphosphate. In terms of biological role, DNA-dependent RNA polymerase catalyzes the transcription of DNA into RNA using the four ribonucleoside triphosphates as substrates. The protein is DNA-directed RNA polymerase subunit beta' of Hordeum vulgare (Barley).